The primary structure comprises 854 residues: Fibroblast growth factor receptor 1 (854 aa).

The first 20 residues, M1–S20, serve as a signal peptide directing secretion. Topologically, residues V21–S383 are extracellular. Residues P29–T120 form the Ig-like C2-type 1 domain. C50 and C102 form a disulfide bridge. N-linked (GlcNAc...) asparagine glycans are attached at residues N95, N99, N110, N118, N140, N175, N202, N248, N283, N317, and N346. 2 consecutive Ig-like C2-type domains span residues P147 to T259 and P268 to I369. A disulfide bridge connects residues C166 and C242. C288 and C353 are joined by a disulfide. A helical transmembrane segment spans residues I384 to F404. The Cytoplasmic segment spans residues F405 to V854. The Protein kinase domain occupies K551–I822. ATP contacts are provided by residues L557–V565 and K585. D689 acts as the Proton acceptor in catalysis. Y718 carries the phosphotyrosine; by autocatalysis modification.

It belongs to the protein kinase superfamily. Tyr protein kinase family. Fibroblast growth factor receptor subfamily. In terms of tissue distribution, expressed in brain, stem cells and the mesenchymal cells.

The protein localises to the membrane. It catalyses the reaction L-tyrosyl-[protein] + ATP = O-phospho-L-tyrosyl-[protein] + ADP + H(+). In terms of biological role, receptor for basic fibroblast growth factor. In Dugesia japonica (Planarian), this protein is Fibroblast growth factor receptor 1 (FGFR1).